Here is a 288-residue protein sequence, read N- to C-terminus: Quinate/shikimate dehydrogenase (288 aa).

Substrate-binding residues include Lys-71 and Asp-107. NAD(+) contacts are provided by residues 132 to 135 (AGGA), 155 to 158 (NRRD), Lys-205, 232 to 235 (CVYN), and Gly-255.

This sequence belongs to the shikimate dehydrogenase family. Homodimer.

It catalyses the reaction L-quinate + NAD(+) = 3-dehydroquinate + NADH + H(+). The enzyme catalyses L-quinate + NADP(+) = 3-dehydroquinate + NADPH + H(+). The catalysed reaction is shikimate + NADP(+) = 3-dehydroshikimate + NADPH + H(+). It carries out the reaction shikimate + NAD(+) = 3-dehydroshikimate + NADH + H(+). It participates in metabolic intermediate biosynthesis; chorismate biosynthesis; chorismate from D-erythrose 4-phosphate and phosphoenolpyruvate: step 4/7. Its function is as follows. The actual biological function of YdiB remains unclear, nor is it known whether 3-dehydroshikimate or quinate represents the natural substrate. Catalyzes the reversible NAD-dependent reduction of both 3-dehydroshikimate (DHSA) and 3-dehydroquinate to yield shikimate (SA) and quinate, respectively. It can use both NAD or NADP for catalysis, however it has higher catalytic efficiency with NAD. The sequence is that of Quinate/shikimate dehydrogenase from Escherichia coli (strain SMS-3-5 / SECEC).